A 192-amino-acid polypeptide reads, in one-letter code: Protein FAM169BP (192 aa).

Residues 121 to 192 (YQAHPGNSED…PPGKLTRSSP (72 aa)) are disordered. Acidic residues predominate over residues 159-177 (EELEDTKDDPECGVEEEDA).

Belongs to the FAM169 family.

The polypeptide is Protein FAM169BP (Homo sapiens (Human)).